The following is a 317-amino-acid chain: Protein-methionine-sulfoxide reductase catalytic subunit MsrP (317 aa).

Residues Met-1 to Ala-40 constitute a signal peptide (tat-type signal). Mo-molybdopterin-binding positions include Asn-71, Tyr-74–Glu-75, Cys-129, Thr-164, Asn-216, Arg-221, and Ser-232–Lys-234.

This sequence belongs to the MsrP family. Heterodimer of a catalytic subunit (MsrP) and a heme-binding subunit (MsrQ). Mo-molybdopterin is required as a cofactor. Post-translationally, predicted to be exported by the Tat system. The position of the signal peptide cleavage has not been experimentally proven.

The protein resides in the periplasm. The enzyme catalyses L-methionyl-[protein] + a quinone + H2O = L-methionyl-(S)-S-oxide-[protein] + a quinol. The catalysed reaction is L-methionyl-[protein] + a quinone + H2O = L-methionyl-(R)-S-oxide-[protein] + a quinol. Functionally, part of the MsrPQ system that repairs oxidized periplasmic proteins containing methionine sulfoxide residues (Met-O), using respiratory chain electrons. Thus protects these proteins from oxidative-stress damage caused by reactive species of oxygen and chlorine generated by the host defense mechanisms. MsrPQ is essential for the maintenance of envelope integrity under bleach stress, rescuing a wide series of structurally unrelated periplasmic proteins from methionine oxidation. The catalytic subunit MsrP is non-stereospecific, being able to reduce both (R-) and (S-) diastereoisomers of methionine sulfoxide. The polypeptide is Protein-methionine-sulfoxide reductase catalytic subunit MsrP (Histophilus somni (strain 2336) (Haemophilus somnus)).